A 321-amino-acid polypeptide reads, in one-letter code: AA9 family lytic polysaccharide monooxygenase C (321 aa).

The signal sequence occupies residues 1–18 (MKLQLIIPFSFLISYVSA). Cu(2+) is bound at residue histidine 19. An N-linked (GlcNAc...) asparagine glycan is attached at asparagine 33. Disulfide bonds link cysteine 57/cysteine 191 and cysteine 161/cysteine 242. Histidine 103 lines the Cu(2+) pocket. Histidine 177 and glutamine 186 together coordinate O2. Tyrosine 188 is a binding site for Cu(2+). Asparagine 195 is a glycosylation site (N-linked (GlcNAc...) asparagine). The region spanning 283 to 319 (GTAAIYAQCGGQGWTGATVCASGSKCVVSSAFYSQCL) is the CBM1 domain.

It belongs to the polysaccharide monooxygenase AA9 family. The cofactor is Cu(2+).

The protein localises to the secreted. The catalysed reaction is [(1-&gt;4)-beta-D-glucosyl]n+m + reduced acceptor + O2 = 4-dehydro-beta-D-glucosyl-[(1-&gt;4)-beta-D-glucosyl]n-1 + [(1-&gt;4)-beta-D-glucosyl]m + acceptor + H2O.. Its function is as follows. Major lytic polysaccharide monooxygenase (LPMO) that depolymerizes crystalline and amorphous polysaccharides via the oxidation of scissile alpha- or beta-(1-4)-glycosidic bonds, yielding C1 and C4 oxidation products. Catalysis by LPMOs requires the reduction of the active-site copper from Cu(II) to Cu(I) by a reducing agent and H(2)O(2) or O(2) as a cosubstrate. This chain is AA9 family lytic polysaccharide monooxygenase C, found in Botryotinia fuckeliana (strain B05.10) (Noble rot fungus).